Here is a 452-residue protein sequence, read N- to C-terminus: Growth/differentiation factor 6 (452 aa).

An N-terminal signal peptide occupies residues 1 to 22 (MDTPRVLLWAIFLISFLWDLPG). Residues 23–332 (FQQASISSSS…LPSPGRRRRR (310 aa)) constitute a propeptide that is removed on maturation. A disordered region spans residues 29-93 (SSSSSTELDS…QEPPGRGPRV (65 aa)). Composition is skewed to basic and acidic residues over residues 37–46 (DSTKDVENRK) and 58–75 (AEGR…ELRR). Asn115 carries an N-linked (GlcNAc...) asparagine glycan. Disordered regions lie at residues 244-267 (RDSG…LGFG) and 301-348 (AEAA…KKSR). Residues 301-317 (AEAAGAEGSWPAPSGAP) are compositionally biased toward low complexity. Residues 327-348 (GRRRRRTALSSRHGKRHGKKSR) are compositionally biased toward basic residues. 3 disulfides stabilise this stretch: Cys351-Cys417, Cys380-Cys449, and Cys384-Cys451.

It belongs to the TGF-beta family. In terms of assembly, homodimer; disulfide-linked.

Its subcellular location is the secreted. Its function is as follows. Growth factor that controls proliferation and cellular differentiation in the retina and bone formation. Plays a key role in regulating apoptosis during retinal development. Establishes dorsal-ventral positional information in the retina and controls the formation of the retinotectal map. Required for normal formation of bones and joints in the limbs, skull, digits and axial skeleton. Plays a key role in establishing boundaries between skeletal elements during development. Regulation of GDF6 expression seems to be a mechanism for evolving species-specific changes in skeletal structures. Seems to positively regulate differentiation of chondrogenic tissue through the growth factor receptors subunits BMPR1A, BMPR1B, BMPR2 and ACVR2A, leading to the activation of SMAD1-SMAD5-SMAD8 complex. The regulation of chondrogenic differentiation is inhibited by NOG. Also involved in the induction of adipogenesis from mesenchymal stem cells. This mechanism acts through the growth factor receptors subunits BMPR1A, BMPR2 and ACVR2A and the activation of SMAD1-SMAD5-SMAD8 complex and MAPK14/p38. The sequence is that of Growth/differentiation factor 6 (Gdf6) from Rattus norvegicus (Rat).